The sequence spans 313 residues: Flagellin (313 aa).

2 coiled-coil regions span residues 5-33 and 97-117; these read INTN…ERLS and VQSE…KEVT. 4 repeat units span residues 179–197, 199–217, 255–259, and 262–266. The segment at 179-217 is 2 X 19 AA approximate tandem repeats; the sequence is KEAVAAKPAVPAQPAVPADPKNGVAAKPAVPAQPEVKAQ. Low complexity predominate over residues 190–199; it reads AQPAVPADPK. Residues 190–211 form a disordered region; the sequence is AQPAVPADPKNGVAAKPAVPAQ. Residues 252 to 298 adopt a coiled-coil conformation; it reads ESTVNNLNNTVNNLSAARSRIEDADYAVEVSNMSRGQILQQAGTSVL. The segment at 255–266 is 2 X 5 AA approximate repeats of V-N-N-L-N; that stretch reads VNNLNNTVNNLS.

This sequence belongs to the bacterial flagellin family.

The protein localises to the secreted. The protein resides in the bacterial flagellum. Flagellin is the subunit protein which polymerizes to form the filaments of bacterial flagella. In Xenorhabdus nematophila (Achromobacter nematophilus), this protein is Flagellin (fliC).